The following is a 419-amino-acid chain: UDP-N-acetylglucosamine 1-carboxyvinyltransferase (419 aa).

Lysine 22 to asparagine 23 contacts phosphoenolpyruvate. UDP-N-acetyl-alpha-D-glucosamine is bound at residue arginine 91. Cysteine 115 functions as the Proton donor in the catalytic mechanism. The residue at position 115 (cysteine 115) is a 2-(S-cysteinyl)pyruvic acid O-phosphothioketal. UDP-N-acetyl-alpha-D-glucosamine is bound by residues arginine 120–leucine 124, lysine 160–valine 163, aspartate 305, and valine 327.

The protein belongs to the EPSP synthase family. MurA subfamily.

The protein resides in the cytoplasm. It catalyses the reaction phosphoenolpyruvate + UDP-N-acetyl-alpha-D-glucosamine = UDP-N-acetyl-3-O-(1-carboxyvinyl)-alpha-D-glucosamine + phosphate. Its pathway is cell wall biogenesis; peptidoglycan biosynthesis. Functionally, cell wall formation. Adds enolpyruvyl to UDP-N-acetylglucosamine. This Salmonella agona (strain SL483) protein is UDP-N-acetylglucosamine 1-carboxyvinyltransferase.